A 476-amino-acid polypeptide reads, in one-letter code: UDP-N-acetylmuramate--L-alanine ligase (476 aa).

121–127 (GAHGKTT) is a binding site for ATP.

The protein belongs to the MurCDEF family.

The protein resides in the cytoplasm. It catalyses the reaction UDP-N-acetyl-alpha-D-muramate + L-alanine + ATP = UDP-N-acetyl-alpha-D-muramoyl-L-alanine + ADP + phosphate + H(+). Its pathway is cell wall biogenesis; peptidoglycan biosynthesis. Functionally, cell wall formation. The sequence is that of UDP-N-acetylmuramate--L-alanine ligase from Clavibacter sepedonicus (Clavibacter michiganensis subsp. sepedonicus).